The primary structure comprises 265 residues: tRNA pseudouridine synthase A (265 aa).

The active-site Nucleophile is aspartate 52. Tyrosine 110 is a binding site for substrate. The segment at 244-265 is disordered; the sequence is FYRDGPPARTPGGTTDAEEDEG.

It belongs to the tRNA pseudouridine synthase TruA family. In terms of assembly, homodimer.

The enzyme catalyses uridine(38/39/40) in tRNA = pseudouridine(38/39/40) in tRNA. In terms of biological role, formation of pseudouridine at positions 38, 39 and 40 in the anticodon stem and loop of transfer RNAs. This chain is tRNA pseudouridine synthase A, found in Myxococcus xanthus.